An 802-amino-acid chain; its full sequence is MAATRIQPSTREIFTTLEYGPVPESHACALAWLDTHNRLLGHYVNGMWLKPEHRNPAPCQDPITGENLASCLQAEAEDISAAVEAARITFKTWSQLPGTARGQHLTRLAKVIQKHQRLLWTLESLVTGRAVREVRDGDIPLAQQLLHYHALQAHAQDSALADWEPLGVIGLILPTSFSFLDMMWRVCPALAMGCTVVALVPPSFPTPLLLAQLAGELGSFPGILNVVCGPVSLGPVLASQPGVQKVAFCGAVEEGRALRQTLAGRGATLGLALGTESLLLLTDSADVDSAVEGVVDAVWSDRSLGGLRLLIQESVWDEAMKRLQARMAQIRSGKGLDGAVDMGARGAAARDLAQSFVDEAQSQGGQVFQAGDMPSNSPFFSPTLVSGLPPAAPCAQAEVPWPVVMASPFRTVKEALALANGTPRGGSASVWSERLGQALELGYGLQVGTVWINAHGLRDPAVPTGGCKESGSSWHGGPDGLYEYLQLLGTPYRESFLCESLNYDTFGLAVSSSLPSGPETGPSPAPPYGLFVRGRFQSPGTQSSRPIKDSSGKVSSYVAEGGAKDIRGAVEAAHQAAPGWGAQSPRARASLLWALAAALERRKQVLAAQLERHGAAPTVAETEVELSVRRLQTWATRVQDQGQTLQVTGLRGPVLRLREPLGVLAVVCPDEWPMLAFVSLLAPALAHGNAVVLVPSGSCPLLALEACQDIAALFPAGLVNVVTGDRDHLTRCLALHQDVQAMWYFGSAQGSQFVEWASAGNLKPVWVNRDFPRAWDVEVQGSEQELSLHAARTKALWLPMGD.

Residues 513–554 (SLPSGPETGPSPAPPYGLFVRGRFQSPGTQSSRPIKDSSGKV) are disordered.

This sequence belongs to the aldehyde dehydrogenase family. Interacts with SPG21.

This Rattus norvegicus (Rat) protein is Aldehyde dehydrogenase family 16 member A1 (Aldh16a1).